Reading from the N-terminus, the 4116-residue chain is Dynein axonemal heavy chain 3 (4116 aa).

Disordered regions lie at residues 1-68 (MGAT…ANEE) and 137-172 (VPRDRTGQGLPSSGNRSSSEPMRKKTKFSSRNKEDS). The segment at 1 to 1390 (MGATGRLELT…QVQIITTEAL (1390 aa)) is stem. The span at 145 to 156 (GLPSSGNRSSSE) shows a compositional bias: polar residues. Residues 785–852 (DLIKRCSEFE…NKEEELLEKE (68 aa)) are a coiled coil. AAA regions lie at residues 1391–1612 (YGYE…VLTA), 1672–1903 (KVLN…LHCK), 2036–2284 (KVPA…VIQG), and 2395–2646 (EFNN…LRRH). Residues 1429-1436 (GPAGTGKT), 1710-1717 (GDPMGGKT), 2074-2081 (GPTGTGKS), and 2434-2441 (GIGGSGRQ) contribute to the ATP site. A stalk region spans residues 2661–2960 (FKTLLNSKRQ…KDLEENIEIC (300 aa)). AAA regions lie at residues 3045-3275 (LGDP…EISE) and 3488-3712 (VREF…QIQM).

It belongs to the dynein heavy chain family. In terms of assembly, consists of at least two heavy chains and a number of intermediate and light chains. As to expression, expressed primarily in trachea and testis, 2 tissues containing axonemal structures. Also expressed in lung.

It is found in the cytoplasm. Its subcellular location is the cytoskeleton. The protein resides in the cilium axoneme. Functionally, force generating protein of respiratory cilia. Produces force towards the minus ends of microtubules. Dynein has ATPase activity; the force-producing power stroke is thought to occur on release of ADP. Involved in sperm motility; implicated in sperm flagellar assembly. This Homo sapiens (Human) protein is Dynein axonemal heavy chain 3 (DNAH3).